The chain runs to 465 residues: Adenosine 3'-phospho 5'-phosphosulfate transporter 1 (465 aa).

Transmembrane regions (helical) follow at residues 13 to 33 (LVIC…SDLL), 61 to 81 (FLKL…GFLI), 142 to 162 (AVQL…WGVL), 185 to 205 (QFLV…YLQW), 270 to 290 (SYEY…MSGS), 299 to 319 (VTTL…SFTA), 339 to 359 (GVNL…GGFM), 370 to 390 (KFVF…LFIY), 391 to 407 (HTID…IMTL), and 424 to 444 (ISLL…LRVY).

This sequence belongs to the nucleotide-sugar transporter family. SLC35B subfamily. As to expression, expressed throughout embryogenesis. During oogenesis, it is expressed strongly in the nurse cells of the germline. Maternally expressed at the syncytial blastoderm stage. Zygotically expressed, from after germ-band elongation in the invaginating salivary gland placodes. Remains expressed predominantly in this tissue throughout embryogenesis, but low-level expression may also be present throughout the embryo.

Its subcellular location is the golgi apparatus membrane. Mediates the transport of adenosine 3'-phospho 5'-phosphosulfate (PAPS), from cytosol into Golgi. PAPS is a universal sulfuryl donor for sulfation events that take place in the Golgi. Required for the dorsoventral patterning, suggesting that it mediates the transport of the sulfate donor required for the sulfotransferase activity of pip (pipe). This chain is Adenosine 3'-phospho 5'-phosphosulfate transporter 1 (sll), found in Drosophila melanogaster (Fruit fly).